The following is a 308-amino-acid chain: D-alanine--D-alanine ligase (308 aa).

The 201-residue stretch at 102-302 (KTVAKSAGIP…FGALLSWMVE (201 aa)) folds into the ATP-grasp domain. 128–183 (PMEPPYVVKPVAEGSSFGVVIVREGQSHPPQVLGSAEWGYGERVMVERYIPGRELT) contributes to the ATP binding site. The Mg(2+) site is built by aspartate 252, glutamate 269, and asparagine 271.

The protein belongs to the D-alanine--D-alanine ligase family. Mg(2+) is required as a cofactor. Mn(2+) serves as cofactor.

The protein resides in the cytoplasm. It catalyses the reaction 2 D-alanine + ATP = D-alanyl-D-alanine + ADP + phosphate + H(+). The protein operates within cell wall biogenesis; peptidoglycan biosynthesis. Functionally, cell wall formation. The sequence is that of D-alanine--D-alanine ligase from Chelativorans sp. (strain BNC1).